A 214-amino-acid polypeptide reads, in one-letter code: dITP/XTP pyrophosphatase (214 aa).

13-18 (SHNAGK) is a binding site for substrate. Mg(2+) is bound by residues Asp45 and Asp74. The active-site Proton acceptor is Asp74. Residues Ser75, 163–166 (FGYD), Lys186, and 199–200 (HR) contribute to the substrate site.

The protein belongs to the HAM1 NTPase family. As to quaternary structure, homodimer. Mg(2+) is required as a cofactor.

The catalysed reaction is XTP + H2O = XMP + diphosphate + H(+). The enzyme catalyses dITP + H2O = dIMP + diphosphate + H(+). It catalyses the reaction ITP + H2O = IMP + diphosphate + H(+). Its function is as follows. Pyrophosphatase that catalyzes the hydrolysis of nucleoside triphosphates to their monophosphate derivatives, with a high preference for the non-canonical purine nucleotides XTP (xanthosine triphosphate), dITP (deoxyinosine triphosphate) and ITP. Seems to function as a house-cleaning enzyme that removes non-canonical purine nucleotides from the nucleotide pool, thus preventing their incorporation into DNA/RNA and avoiding chromosomal lesions. The chain is dITP/XTP pyrophosphatase from Rhizobium meliloti (strain 1021) (Ensifer meliloti).